Reading from the N-terminus, the 341-residue chain is Mitochondrial ubiquitin ligase activator of nfkb 1-A (341 aa).

Residues 1 to 5 (MEDFP) lie on the Cytoplasmic side of the membrane. Residues 6–26 (VLEMVCLGSSVALSGLFYYIY) form a helical membrane-spanning segment. The Mitochondrial intermembrane portion of the chain corresponds to 27–233 (RKKRKTVDKL…LLMEQEGQAE (207 aa)). The chain crosses the membrane as a helical span at residues 234–254 (VWRVFACICALAGVAVLIWTG). The Cytoplasmic portion of the chain corresponds to 255 to 341 (RRYYRQLKLR…IKRVVPLYQA (87 aa)). The segment at 292-329 (CVICLSNPRGCVLLDCGHVCCCFRCYQALPQPFCPICR) adopts an RING-type zinc-finger fold.

In terms of assembly, homooligomer.

The protein localises to the mitochondrion outer membrane. The catalysed reaction is S-ubiquitinyl-[E2 ubiquitin-conjugating enzyme]-L-cysteine + [acceptor protein]-L-lysine = [E2 ubiquitin-conjugating enzyme]-L-cysteine + N(6)-ubiquitinyl-[acceptor protein]-L-lysine.. It functions in the pathway protein modification; protein ubiquitination. In terms of biological role, E3 ubiquitin-protein ligase that plays a role in the control of mitochondrial morphology. Promotes mitochondrial fragmentation and influences mitochondrial localization. Inhibits cell growth. E3 ubiquitin ligases accept ubiquitin from an E2 ubiquitin-conjugating enzyme in the form of a thioester and then directly transfer the ubiquitin to targeted substrates. This chain is Mitochondrial ubiquitin ligase activator of nfkb 1-A (mul1a), found in Danio rerio (Zebrafish).